The sequence spans 73 residues: Toxin Td7 (73 aa).

An N-terminal signal peptide occupies residues 1 to 7; that stretch reads IGMAVEC. One can recognise an LCN-type CS-alpha/beta domain in the interval 8–70; the sequence is KDGYLVGADG…VWDSATNRCG (63 aa). Disulfide bonds link C18/C69, C22/C44, C30/C50, and C34/C52. Lysine amide is present on K71.

The protein belongs to the long (4 C-C) scorpion toxin superfamily. Sodium channel inhibitor family. Beta subfamily. Expressed by the venom gland.

It is found in the secreted. Functionally, beta toxins bind voltage-independently at site-4 of sodium channels (Nav) and shift the voltage of activation toward more negative potentials thereby affecting sodium channel activation and promoting spontaneous and repetitive firing. This Tityus discrepans (Venezuelan scorpion) protein is Toxin Td7.